Consider the following 1842-residue polypeptide: Fatty acid synthase alpha subunit pigJ (1842 aa).

The interval 120–184 (GAPVEEEGSK…TPAGGSTTPD (65 aa)) is disordered. Over residues 140–175 (SGSSRTATTAKATVTTPSSSSPETAPPAASTPSQGT) the composition is skewed to low complexity. The region spanning 184–262 (DIPLSAKHVV…DALQGNFPGK (79 aa)) is the Carrier domain. Position 222 is an O-(pantetheine 4'-phosphoryl)serine (Ser-222). Residues 611-807 (GKTVLVTGAG…CGAAIGWVRG (197 aa)) are beta-ketoacyl reductase. Positions 1058–1585 (KEFLQEIVVE…QKGGIAVVVA (528 aa)) constitute a Ketosynthase family 3 (KS3) domain. Active-site for beta-ketoacyl synthase activity residues include Cys-1244, His-1470, and His-1511. A disordered region spans residues 1649 to 1672 (KARVGGHPENNNNNNNNSSSKRNT). A compositionally biased stretch (low complexity) spans 1658-1668 (NNNNNNNNSSS). Asp-1725, Val-1726, and Glu-1727 together coordinate Mg(2+). Acetyl-CoA is bound by residues 1725-1727 (DVE), Ser-1761, 1770-1780 (EAVFKSLQTPS), and 1823-1825 (ITH). Mg(2+)-binding residues include Thr-1824 and His-1825.

Belongs to the thiolase-like superfamily. Fungal fatty acid synthetase subunit alpha family. In terms of assembly, [Alpha(6)beta(6)] hexamers of two multifunctional subunits (alpha and beta).

It carries out the reaction acetyl-CoA + n malonyl-CoA + 2n NADPH + 4n H(+) = a long-chain-acyl-CoA + n CoA + n CO2 + 2n NADP(+).. The enzyme catalyses a fatty acyl-[ACP] + malonyl-[ACP] + H(+) = a 3-oxoacyl-[ACP] + holo-[ACP] + CO2. It catalyses the reaction a (3R)-hydroxyacyl-[ACP] + NADP(+) = a 3-oxoacyl-[ACP] + NADPH + H(+). The protein operates within secondary metabolite biosynthesis. Its function is as follows. Fatty acid synthase alpha subunit; part of the gene cluster that mediates the biosynthesis of azaphilone pigments (MonAzPs), a complex mixture of compounds with a common azaphilone skeleton very widely used as food colorants. PigJ and pigK form the two subunits of a dedicated fungal fatty acid synthase (FAS) that produces the side chain fatty acyl moiety of MonAzPs, a beta-keto fatty acid. The chain length control of the pigJ-pigK FAS is somewhat flexible as MonAzPs features either a beta-ketooctanoic or a beta-ketodecanoic acid moiety. The beta-ketoacyl-ACP probably serves as the substrate for the acetyltransferase pigD that directly transfers the fatty acyl chain to the C-4 alcohol of the pyran ring. The first step of the pathway is performed by the nrPKS pigA that forms the hexaketide precursor from successive condensations of five malonyl-CoA units, with a simple acetyl-CoA starter unit. The role of esterase pigG is not clear, but it may play at most a supplementary role in the formation of the benzaldehyde produced by the pigA nrPKS. This very reactive benzaldehyde is intercepted by the pigC ketoreductase that to provide the first stable enzyme-free MonAzPs intermediate, 6-(4-hydroxy-2-oxopentyl)-3-methyl-2,4-dioxocyclohexane carbaldehyde, also known as M7PKS-1. The FAD-dependent monooxygenase pigN hydroxylates M7PKS-1 at C-4, which triggers the formation of the pyran ring. PigJ, pigK and pigD are involved in the acetylation of the pyran ring. PigJ and pigK form the two subunits of a dedicated fungal FAS that produces the side chain fatty acyl moiety of MonAzPs and pigD transfers the fatty acyl chain to the C-4 alcohol. PigM and pigO are involved in the elimination of the omega-1 alcohol. PigM acts as an O-acetyltransferase that synthesizes the putative O-11 acetyl intermediate whereas pigO eliminates acetic acid to yield an intermediate with a C10(11) double bond. The dehydration of the C-11 alcohol followed by the reduction of the C6(7) double bond by the NAD(P)H-dependent oxidoreductase pigE increases the electrophilicity of the C-5 ketone of the resulting acyl benzopyran. This in turn sets up the C-5 ketone for an intramolecular Knoevenagel aldol condensation with the C-20 enol of the side chain. This condensation affords the characteristic linear tricyclic carbon skeletons of the yellow pigments that serve as the common precursors for the classical yellow pigments monascin and ankaflavin, orange pigments rubopunctatin and monascorubrin, and red pigments ribropunctamine and monascorubramine. The FAD-dependent oxidoreductase pigF is especially invoved in the biosynthesis of orange and red pigments via desaturation of C6(7). The chain is Fatty acid synthase alpha subunit pigJ from Monascus ruber (Mold).